We begin with the raw amino-acid sequence, 692 residues long: Elongation factor G (692 aa).

A tr-type G domain is found at 8 to 283 (NRIRNIGIAA…AVIDYLPAPT (276 aa)). Residues 17 to 24 (AHIDAGKT), 81 to 85 (DTPGH), and 135 to 138 (NKMD) contribute to the GTP site.

This sequence belongs to the TRAFAC class translation factor GTPase superfamily. Classic translation factor GTPase family. EF-G/EF-2 subfamily.

It is found in the cytoplasm. Its function is as follows. Catalyzes the GTP-dependent ribosomal translocation step during translation elongation. During this step, the ribosome changes from the pre-translocational (PRE) to the post-translocational (POST) state as the newly formed A-site-bound peptidyl-tRNA and P-site-bound deacylated tRNA move to the P and E sites, respectively. Catalyzes the coordinated movement of the two tRNA molecules, the mRNA and conformational changes in the ribosome. The chain is Elongation factor G from Helicobacter pylori (strain P12).